Here is a 466-residue protein sequence, read N- to C-terminus: 3-isopropylmalate dehydratase large subunit (466 aa).

Positions 347, 407, and 410 each coordinate [4Fe-4S] cluster.

The protein belongs to the aconitase/IPM isomerase family. LeuC type 1 subfamily. Heterodimer of LeuC and LeuD. [4Fe-4S] cluster is required as a cofactor.

The enzyme catalyses (2R,3S)-3-isopropylmalate = (2S)-2-isopropylmalate. Its pathway is amino-acid biosynthesis; L-leucine biosynthesis; L-leucine from 3-methyl-2-oxobutanoate: step 2/4. Catalyzes the isomerization between 2-isopropylmalate and 3-isopropylmalate, via the formation of 2-isopropylmaleate. The sequence is that of 3-isopropylmalate dehydratase large subunit from Shewanella sediminis (strain HAW-EB3).